We begin with the raw amino-acid sequence, 234 residues long: Small ribosomal subunit protein uS3 (234 aa).

A KH type-2 domain is found at 39–107 (VRKFLNKELA…PAQINIAEVK (69 aa)).

It belongs to the universal ribosomal protein uS3 family. Part of the 30S ribosomal subunit. Forms a tight complex with proteins S10 and S14.

Its function is as follows. Binds the lower part of the 30S subunit head. Binds mRNA in the 70S ribosome, positioning it for translation. The chain is Small ribosomal subunit protein uS3 from Haemophilus ducreyi (strain 35000HP / ATCC 700724).